The chain runs to 329 residues: 4-hydroxythreonine-4-phosphate dehydrogenase (329 aa).

Residues H136 and T137 each contribute to the substrate site. Positions 166, 211, and 266 each coordinate a divalent metal cation. 3 residues coordinate substrate: K274, N283, and R292.

It belongs to the PdxA family. As to quaternary structure, homodimer. Zn(2+) is required as a cofactor. Mg(2+) serves as cofactor. Requires Co(2+) as cofactor.

It localises to the cytoplasm. It catalyses the reaction 4-(phosphooxy)-L-threonine + NAD(+) = 3-amino-2-oxopropyl phosphate + CO2 + NADH. It participates in cofactor biosynthesis; pyridoxine 5'-phosphate biosynthesis; pyridoxine 5'-phosphate from D-erythrose 4-phosphate: step 4/5. Functionally, catalyzes the NAD(P)-dependent oxidation of 4-(phosphooxy)-L-threonine (HTP) into 2-amino-3-oxo-4-(phosphooxy)butyric acid which spontaneously decarboxylates to form 3-amino-2-oxopropyl phosphate (AHAP). The chain is 4-hydroxythreonine-4-phosphate dehydrogenase from Shigella flexneri serotype 5b (strain 8401).